Reading from the N-terminus, the 263-residue chain is Tryptophan synthase alpha chain (263 aa).

Active-site proton acceptor residues include E49 and D60.

The protein belongs to the TrpA family. As to quaternary structure, tetramer of two alpha and two beta chains.

It carries out the reaction (1S,2R)-1-C-(indol-3-yl)glycerol 3-phosphate + L-serine = D-glyceraldehyde 3-phosphate + L-tryptophan + H2O. The protein operates within amino-acid biosynthesis; L-tryptophan biosynthesis; L-tryptophan from chorismate: step 5/5. In terms of biological role, the alpha subunit is responsible for the aldol cleavage of indoleglycerol phosphate to indole and glyceraldehyde 3-phosphate. The chain is Tryptophan synthase alpha chain from Jannaschia sp. (strain CCS1).